Consider the following 334-residue polypeptide: D-fructose 1,6-bisphosphatase class 2/sedoheptulose 1,7-bisphosphatase (334 aa).

Mn(2+)-binding residues include Asp-33, Glu-57, Asp-85, and Glu-88. Substrate-binding positions include 88–90 (EGT), Tyr-119, 164–166 (RAR), and 186–188 (DGD). Glu-213 contacts Mn(2+).

Belongs to the FBPase class 2 family. In terms of assembly, homotetramer. The cofactor is Mn(2+).

The enzyme catalyses beta-D-fructose 1,6-bisphosphate + H2O = beta-D-fructose 6-phosphate + phosphate. It carries out the reaction D-sedoheptulose 1,7-bisphosphate + H2O = D-sedoheptulose 7-phosphate + phosphate. Its pathway is carbohydrate biosynthesis; Calvin cycle. Its function is as follows. Catalyzes the hydrolysis of fructose 1,6-bisphosphate (Fru 1,6-P2) and sedoheptulose 1,7-bisphosphate (Sed 1,7-P2) to fructose 6-phosphate and sedoheptulose 7-phosphate, respectively. This chain is D-fructose 1,6-bisphosphatase class 2/sedoheptulose 1,7-bisphosphatase, found in Synechococcus sp. (strain CC9311).